Reading from the N-terminus, the 475-residue chain is Ankyrin repeat, SAM and basic leucine zipper domain-containing protein 1 (475 aa).

Positions 1–23 are disordered; sequence MAAARFRGLAVAGGGESSESEDD. Serine 17, serine 18, and serine 20 each carry phosphoserine. 6 ANK repeats span residues 45 to 74, 78 to 107, 110 to 144, 148 to 177, 181 to 210, and 214 to 243; these read EKNE…SVDS, YGWT…KASF, DKQT…DPNV, RLMT…EVNT, NGYT…NKML, and DGKT…PLEG. Residues 272 to 334 form the SAM domain; it reads SYTAFGDLEI…KILAALKELE (63 aa).

As to quaternary structure, interacts with DDX4, PIWIL1, RANBP9 and TDRD1.

It is found in the cytoplasm. Plays a central role during spermatogenesis by repressing transposable elements and preventing their mobilization, which is essential for the germline integrity. Acts via the piRNA metabolic process, which mediates the repression of transposable elements during meiosis by forming complexes composed of piRNAs and Piwi proteins and governs the methylation and subsequent repression of transposons. Its association with pi-bodies suggests a participation in the primary piRNAs metabolic process. Required prior to the pachytene stage to facilitate the production of multiple types of piRNAs, including those associated with repeats involved in the regulation of retrotransposons. May act by mediating protein-protein interactions during germ cell maturation. The protein is Ankyrin repeat, SAM and basic leucine zipper domain-containing protein 1 (ASZ1) of Equus caballus (Horse).